The primary structure comprises 609 residues: Phosphoenolpyruvate carboxykinase [GTP] (609 aa).

Residues Arg81 and 220-222 each bind substrate; that span reads YGG. Residues Lys229 and His249 each coordinate Mn(2+). Ser271 is a binding site for substrate. 272–277 contacts GTP; sequence ACGKTN. Cys273 is a catalytic residue. Asp296 lines the Mn(2+) pocket. 387–389 contributes to the substrate binding site; that stretch reads NSR. GTP-binding positions include Arg389, Arg420, and 515–518; that span reads FGEN.

Belongs to the phosphoenolpyruvate carboxykinase [GTP] family. As to quaternary structure, monomer. It depends on Mn(2+) as a cofactor.

It localises to the cytoplasm. The catalysed reaction is oxaloacetate + GTP = phosphoenolpyruvate + GDP + CO2. It functions in the pathway carbohydrate biosynthesis; gluconeogenesis. Its function is as follows. Catalyzes the conversion of oxaloacetate (OAA) to phosphoenolpyruvate (PEP), the rate-limiting step in the metabolic pathway that produces glucose from lactate and other precursors derived from the citric acid cycle. This is Phosphoenolpyruvate carboxykinase [GTP] from Mycolicibacterium paratuberculosis (strain ATCC BAA-968 / K-10) (Mycobacterium paratuberculosis).